The sequence spans 244 residues: uncharacterized protein (244 aa).

Helical transmembrane passes span Trp29–Met49 and Leu139–Ile159.

This sequence belongs to the FMP10 family.

Its subcellular location is the mitochondrion membrane. This is an uncharacterized protein from Saccharomyces cerevisiae (strain ATCC 204508 / S288c) (Baker's yeast).